The sequence spans 562 residues: RNA N(6)-adenosine-methyltransferase METTL16 (562 aa).

The interval 17-20 (PPDF) is RNA-binding. Positions 82, 110, 114, 133, 164, and 184 each coordinate S-adenosyl-L-methionine. Residues 163 to 167 (KTLLM) form a K-loop region. RNA-binding stretches follow at residues 199–211 (SRNP…SSVN), 250–254 (GKKCS), and 277–283 (QGRTMRW). A VCR 1 region spans residues 289-400 (FYDDVTVPSP…QLREVPRAPE (112 aa)). The residue at position 329 (Ser329) is a Phosphoserine. Residues 402–413 (VIQALEEKKPTP) show a composition bias toward basic and acidic residues. Residues 402 to 498 (VIQALEEKKP…DQEASEQFGS (97 aa)) form a disordered region. A compositionally biased stretch (acidic residues) spans 458 to 467 (ENPEPTEDER). Thr463 bears the Phosphothreonine mark. Residues 480-496 (CQGSSNGAQDQEASEQF) show a composition bias toward polar residues. A VCR 2 region spans residues 514-562 (YLFKCLINVKKEVDDALVEMHWVEGQNRDLMNQLCTYIRNQIFRLVAVN).

The protein belongs to the methyltransferase superfamily. METTL16/RlmF family. Interacts with MEPCE. Interacts with LARP7.

Its subcellular location is the nucleus. The protein localises to the cytoplasm. The enzyme catalyses adenosine in U6 snRNA + S-adenosyl-L-methionine = N(6)-methyladenosine in U6 snRNA + S-adenosyl-L-homocysteine + H(+). It carries out the reaction an adenosine in mRNA + S-adenosyl-L-methionine = an N(6)-methyladenosine in mRNA + S-adenosyl-L-homocysteine + H(+). Its activity is regulated as follows. Methyltransferase activity is autoinhibited by the K-loop region that blocks S-adenosyl-L-methionine-binding. Upon activation, K-loop changes conformation, allowing S-adenosyl-L-methionine-binding and subsequent methyltransferase activity. mRNA N6-adenosine-methyltransferase activity is inhibited by zinc. Functionally, RNA N6-methyltransferase that methylates adenosine residues at the N(6) position of a subset of RNAs and is involved in S-adenosyl-L-methionine homeostasis by regulating expression of MAT2A transcripts. Able to N6-methylate a subset of mRNAs and U6 small nuclear RNAs (U6 snRNAs). In contrast to the METTL3-METTL14 heterodimer, only able to methylate a limited number of RNAs: requires both a 5'UACAGAGAA-3' nonamer sequence and a specific RNA structure. Plays a key role in S-adenosyl-L-methionine homeostasis by mediating N6-methylation of MAT2A mRNAs, altering splicing of MAT2A transcripts: in presence of S-adenosyl-L-methionine, binds the 3'-UTR region of MAT2A mRNA and specifically N6-methylates the first hairpin of MAT2A mRNA, preventing recognition of their 3'-splice site by U2AF1/U2AF35, thereby inhibiting splicing and protein production of S-adenosylmethionine synthase. In S-adenosyl-L-methionine-limiting conditions, binds the 3'-UTR region of MAT2A mRNA but stalls due to the lack of a methyl donor, preventing N6-methylation and promoting expression of MAT2A. In addition to mRNAs, also able to mediate N6-methylation of U6 small nuclear RNA (U6 snRNA): specifically N6-methylates adenine in position 43 of U6 snRNAs. Also able to bind various lncRNAs, such as 7SK snRNA (7SK RNA) or 7SL RNA. Specifically binds the 3'-end of the MALAT1 long non-coding RNA. This chain is RNA N(6)-adenosine-methyltransferase METTL16, found in Homo sapiens (Human).